The chain runs to 614 residues: WD repeat-containing protein 26 (614 aa).

2 stretches are compositionally biased toward low complexity: residues 1 to 19 (MQANGAAAAAAGEEPAGSG) and 34 to 44 (SNGVLSSNNGL). Positions 1-65 (MQANGAAAAA…PGGRKKKRLS (65 aa)) are disordered. The LisH domain occupies 67–99 (ADEDVIRLIGQHLHGLGLNQTVDLLMQESGCRL). A CTLH domain is found at 100 to 184 (EHPSATKFRN…EYLEDGKVLE (85 aa)). WD repeat units lie at residues 306-345 (EHCNEVWFCKFSNDGTKLATGSKDTTVIIWQVDPDTHQLK), 352-391 (GHAYGVSYLAWSPDDNYLIACGPDDCSELWLWNVQTGELR), 397-437 (SHED…DSWE), 477-516 (QEDHPIMSFTISRNGRLALLNVATQGVHLWDLQDRVLVRK), 519-561 (GVTQ…PIAE), and 564-604 (GHTR…DNQE).

Forms homooligomers. Identified in the CTLH complex that contains at least MAEA, RMND5A (or alternatively its paralog RMND5B), GID8, WDR26, and RANBP9 and/or RANBP10. Interacts with DDB1-CUL4A/B E3 ligase complexes.

It localises to the cytoplasm. It is found in the nucleus. The protein resides in the mitochondrion. G-beta-like protein involved in cell signal transduction. Acts as a negative regulator in MAPK signaling pathway. Functions as a scaffolding protein to promote G beta:gamma-mediated PLCB2 plasma membrane translocation and subsequent activation in leukocytes. Core component of the CTLH E3 ubiquitin-protein ligase complex that mediates ubiquitination and subsequent proteasomal degradation of target proteins. Acts as a negative regulator of the canonical Wnt signaling pathway through preventing ubiquitination of beta-catenin CTNNB1 by the beta-catenin destruction complex, thus negatively regulating CTNNB1 degradation. Serves as a scaffold to coordinate PI3K/AKT pathway-driven cell growth and migration. Protects cells from oxidative stress-induced apoptosis via the down-regulation of AP-1 transcriptional activity as well as by inhibiting cytochrome c release from mitochondria. Also protects cells by promoting hypoxia-mediated autophagy and mitophagy. The protein is WD repeat-containing protein 26 (wdr26) of Xenopus tropicalis (Western clawed frog).